The chain runs to 328 residues: tRNA methyltransferase 10 homolog A (328 aa).

Disordered stretches follow at residues methionine 1 to valine 91 and histidine 281 to glutamine 328. Phosphoserine is present on serine 22. Positions arginine 43–serine 83 form a coiled coil. Basic and acidic residues predominate over residues lysine 52–lysine 62. The span at glutamate 63–glutamate 75 shows a compositional bias: basic residues. An SAM-dependent MTase TRM10-type domain is found at arginine 88 to valine 278. The segment covering glutamate 305–glutamine 319 has biased composition (basic and acidic residues).

The protein belongs to the class IV-like SAM-binding methyltransferase superfamily. TRM10 family. In terms of assembly, interacts with tRNA.

It localises to the nucleus. The protein resides in the nucleolus. It catalyses the reaction guanosine(9) in tRNA + S-adenosyl-L-methionine = N(1)-methylguanosine(9) in tRNA + S-adenosyl-L-homocysteine + H(+). Functionally, S-adenosyl-L-methionine-dependent guanine N(1)-methyltransferase that catalyzes the formation of N(1)-methylguanine at position 9 (m1G9) in tRNAs. Probably not able to catalyze formation of N(1)-methyladenine at position 9 (m1A9) in tRNAs. The sequence is that of tRNA methyltransferase 10 homolog A (Trmt10a) from Mus musculus (Mouse).